A 146-amino-acid chain; its full sequence is Hut operon positive regulatory protein (146 aa).

It belongs to the HutP family. In terms of assembly, homohexamer.

In terms of biological role, antiterminator that binds to cis-acting regulatory sequences on the mRNA in the presence of histidine, thereby suppressing transcription termination and activating the hut operon for histidine utilization. The protein is Hut operon positive regulatory protein of Bacillus mycoides (strain KBAB4) (Bacillus weihenstephanensis).